The chain runs to 246 residues: Purine nucleoside phosphorylase Cgl2154/cg2365 (246 aa).

Zn(2+) contacts are provided by His68, Cys107, and His124.

Belongs to the purine nucleoside phosphorylase YfiH/LACC1 family. As to quaternary structure, homodimer. The cofactor is Cu(2+). Zn(2+) serves as cofactor.

It catalyses the reaction adenosine + phosphate = alpha-D-ribose 1-phosphate + adenine. The catalysed reaction is S-methyl-5'-thioadenosine + phosphate = 5-(methylsulfanyl)-alpha-D-ribose 1-phosphate + adenine. The enzyme catalyses inosine + phosphate = alpha-D-ribose 1-phosphate + hypoxanthine. It carries out the reaction adenosine + H2O + H(+) = inosine + NH4(+). Its function is as follows. Purine nucleoside enzyme that catalyzes the phosphorolysis of adenosine and inosine nucleosides, yielding D-ribose 1-phosphate and the respective free bases, adenine and hypoxanthine. Also catalyzes the phosphorolysis of S-methyl-5'-thioadenosine into adenine and S-methyl-5-thio-alpha-D-ribose 1-phosphate. Also has adenosine deaminase activity. The polypeptide is Purine nucleoside phosphorylase Cgl2154/cg2365 (Corynebacterium glutamicum (strain ATCC 13032 / DSM 20300 / JCM 1318 / BCRC 11384 / CCUG 27702 / LMG 3730 / NBRC 12168 / NCIMB 10025 / NRRL B-2784 / 534)).